Here is a 240-residue protein sequence, read N- to C-terminus: uncharacterized protein (240 aa).

2 disordered regions span residues 125–148 and 177–240; these read RRLDFSSEDGEEEEENDYIDEDVD and DESN…RKSR. The span at 130–148 shows a compositional bias: acidic residues; it reads SSEDGEEEEENDYIDEDVD. Residues 192–203 are compositionally biased toward basic and acidic residues; that stretch reads SPRKSHIDHDFV. Acidic residues predominate over residues 204–217; the sequence is IPEDEMLSEEEEQE. Ser-231 is modified (phosphoserine).

The protein belongs to the UTP5 family.

It localises to the cytoplasm. Its subcellular location is the nucleus. This is an uncharacterized protein from Schizosaccharomyces pombe (strain 972 / ATCC 24843) (Fission yeast).